Reading from the N-terminus, the 411-residue chain is Peptidase T (411 aa).

A Zn(2+)-binding site is contributed by H79. D81 is an active-site residue. D142 is a binding site for Zn(2+). E176 functions as the Proton acceptor in the catalytic mechanism. Residues E177, D199, and H381 each contribute to the Zn(2+) site.

This sequence belongs to the peptidase M20B family. The cofactor is Zn(2+).

The protein resides in the cytoplasm. The enzyme catalyses Release of the N-terminal residue from a tripeptide.. Its function is as follows. Cleaves the N-terminal amino acid of tripeptides. This chain is Peptidase T, found in Exiguobacterium sibiricum (strain DSM 17290 / CCUG 55495 / CIP 109462 / JCM 13490 / 255-15).